An 872-amino-acid polypeptide reads, in one-letter code: Alanine--tRNA ligase (872 aa).

Histidine 567, histidine 571, cysteine 669, and histidine 673 together coordinate Zn(2+).

It belongs to the class-II aminoacyl-tRNA synthetase family. The cofactor is Zn(2+).

Its subcellular location is the cytoplasm. The enzyme catalyses tRNA(Ala) + L-alanine + ATP = L-alanyl-tRNA(Ala) + AMP + diphosphate. Functionally, catalyzes the attachment of alanine to tRNA(Ala) in a two-step reaction: alanine is first activated by ATP to form Ala-AMP and then transferred to the acceptor end of tRNA(Ala). Also edits incorrectly charged Ser-tRNA(Ala) and Gly-tRNA(Ala) via its editing domain. The protein is Alanine--tRNA ligase of Streptococcus pneumoniae (strain CGSP14).